A 946-amino-acid polypeptide reads, in one-letter code: Probable leucine-rich repeat receptor-like protein kinase At5g49770 (946 aa).

Positions 1–25 are cleaved as a signal peptide; sequence MKMSSRIGLFKLLILLFFQIYSVYA. The Extracellular segment spans residues 26–561; that stretch reads FTDGSDFTAL…LEDSKTVSMK (536 aa). LRR repeat units follow at residues 67-91, 92-116, 118-140, 141-164, 166-191, 195-219, 221-244, 245-268, 269-293, 295-314, 316-340, 342-365, 367-387, and 389-407; these read DNRVVSISLTNRNLKGKLPTEISTL, SELQTLDLTGNPELSGPLPANIGNL, KLTFLSLMGCAFNGPIPDSIGNL, EQLTRLSLNLNKFSGTIPASMGRL, KLYWFDIADNQLEGKLPVSDGASLPG, LLQTGHFHFGNNKLSGEIPEKLFSS, MTLLHVLFDGNQFTGSIPESLGLV, QNLTVLRLDRNRLSGDIPSSLNNL, TNLQELHLSDNKFTGSLPNLTSLTS, YTLDVSNNPLALSPVPSWIP, LNSLSTLRLEDIQLDGPVPTSLFSP, QLQTVSLKHNLINTTLDLGTNYSK, LDFVDLRDNFITGYKSPANNP, and NVMLADNQVCQDPANQLSG. N-linked (GlcNAc...) asparagine glycosylation is found at N246, N267, and N287. N-linked (GlcNAc...) asparagine glycans are attached at residues N354 and N362. Residues N415, N460, N489, and N514 are each glycosylated (N-linked (GlcNAc...) asparagine). The helical transmembrane segment at 562–582 threads the bilayer; sequence VIIGVVVGVVVLLLLLALAGI. Residues 583-946 are Cytoplasmic-facing; the sequence is YALRQKKRAQ…YTGVFPTPKP (364 aa). Residues 634–908 form the Protein kinase domain; the sequence is FSDANDVGGG…EVVQELESIL (275 aa). Residues 640–648 and K662 contribute to the ATP site; that span reads VGGGGYGQV. The active-site Proton acceptor is the D758. The tract at residues 919–946 is disordered; that stretch reads SATYEEASGDPYGRDSFEYTGVFPTPKP.

The protein belongs to the protein kinase superfamily. Ser/Thr protein kinase family.

Its subcellular location is the membrane. It carries out the reaction L-seryl-[protein] + ATP = O-phospho-L-seryl-[protein] + ADP + H(+). The enzyme catalyses L-threonyl-[protein] + ATP = O-phospho-L-threonyl-[protein] + ADP + H(+). This Arabidopsis thaliana (Mouse-ear cress) protein is Probable leucine-rich repeat receptor-like protein kinase At5g49770.